The primary structure comprises 277 residues: MQGEASRLADRESRDSFAAKLRESGNDAWEIGNELFTITYVFDHNPRIPRALTDPGRPTEDKVALLNNLLGKQALPLTMEILTDLVGRSWSRAGDIDNAIEDFAVDAMMYQADDEKKTLKVSVQLAQLQSALLNLPVVRSDLSDSQGPLNVRYELLHALIDGADFDRITVRLAEHCTRNPRNRRYLESVQWLINKFSRHMGESMVTVTTATPLSDEQSDKLARIYTKKTGRPVHIHSVVDPTVMGGMRIQVGDEVTDNTVVAQLENLKRKVKAGVSE.

The protein belongs to the ATPase delta chain family. F-type ATPases have 2 components, F(1) - the catalytic core - and F(0) - the membrane proton channel. F(1) has five subunits: alpha(3), beta(3), gamma(1), delta(1), epsilon(1). F(0) has three main subunits: a(1), b(2) and c(10-14). The alpha and beta chains form an alternating ring which encloses part of the gamma chain. F(1) is attached to F(0) by a central stalk formed by the gamma and epsilon chains, while a peripheral stalk is formed by the delta and b chains.

It is found in the cell membrane. Its function is as follows. F(1)F(0) ATP synthase produces ATP from ADP in the presence of a proton or sodium gradient. F-type ATPases consist of two structural domains, F(1) containing the extramembraneous catalytic core and F(0) containing the membrane proton channel, linked together by a central stalk and a peripheral stalk. During catalysis, ATP synthesis in the catalytic domain of F(1) is coupled via a rotary mechanism of the central stalk subunits to proton translocation. This protein is part of the stalk that links CF(0) to CF(1). It either transmits conformational changes from CF(0) to CF(1) or is implicated in proton conduction. This is ATP synthase subunit delta from Bifidobacterium animalis subsp. lactis (strain AD011).